Here is a 209-residue protein sequence, read N- to C-terminus: uncharacterized protein (209 aa).

The segment at aspartate 177 to glycine 209 is disordered. Residues serine 183–asparagine 202 are compositionally biased toward acidic residues.

This is an uncharacterized protein from Acanthamoeba polyphaga (Amoeba).